The following is a 226-amino-acid chain: MNNFLLDFLALGAVLSGILVITSKNPVISVLFLISVFVNVAGYLVLLGVGFIGISYLIVYIGAVTVLFLFVIMMLNLQLTELSAVGNEYTKNLPLATIIGSLLLFELVSVVPSFDGFYQLNSTTTIFKFLGVGILNWFNSLSLGVGNTFAFAEVNQTFNTFAADTQFANFLQIQSIGQVLYTNGALWLIVSSLILLLAMVGPITLSMNKKDSSPANQVNTVNRLVK.

The next 6 helical transmembrane spans lie at 1–21 (MNNF…ILVI), 27–47 (VISV…LVLL), 52–72 (IGIS…LFVI), 94–114 (PLAT…VPSF), 126–146 (IFKF…LGVG), and 185–205 (ALWL…PITL).

Belongs to the complex I subunit 6 family.

The protein resides in the mitochondrion inner membrane. The enzyme catalyses a ubiquinone + NADH + 5 H(+)(in) = a ubiquinol + NAD(+) + 4 H(+)(out). Core subunit of the mitochondrial membrane respiratory chain NADH dehydrogenase (Complex I) that is believed to belong to the minimal assembly required for catalysis. Complex I functions in the transfer of electrons from NADH to the respiratory chain. The immediate electron acceptor for the enzyme is believed to be ubiquinone. The polypeptide is NADH-ubiquinone oxidoreductase chain 6 (ND6) (Mycosarcoma maydis (Corn smut fungus)).